A 335-amino-acid chain; its full sequence is UPF0353 protein MMAR_2288 (335 aa).

2 helical membrane passes run 18 to 38 (WFFLFIFVIAGLIAVYVVLQL) and 67 to 87 (IPAMLLALSLVLFTVAMAGPT). A VWFA domain is found at 98 to 294 (VVMLVIDVSQ…AELNSVYASL (197 aa)). A helical membrane pass occupies residues 309-329 (MGWLRLGALVLVAAALAALLI).

The protein belongs to the UPF0353 family.

It is found in the cell membrane. The protein is UPF0353 protein MMAR_2288 of Mycobacterium marinum (strain ATCC BAA-535 / M).